Consider the following 311-residue polypeptide: Probable manganese-dependent inorganic pyrophosphatase (311 aa).

H9, D13, D15, D75, H97, and D149 together coordinate Mn(2+).

Belongs to the PPase class C family. Mn(2+) serves as cofactor.

The protein resides in the cytoplasm. It catalyses the reaction diphosphate + H2O = 2 phosphate + H(+). The protein is Probable manganese-dependent inorganic pyrophosphatase of Lactobacillus helveticus (strain DPC 4571).